The following is a 256-amino-acid chain: Lysosomal membrane ascorbate-dependent ferrireductase CYB561A3 (256 aa).

Topologically, residues 1–3 (MAS) are cytoplasmic. Residues 4–24 (GWFYMSCMVLGSLGSMCILFT) form a helical membrane-spanning segment. The Cytochrome b561 domain maps to 12–219 (VLGSLGSMCI…FGLLVLYILL (208 aa)). Topologically, residues 25–40 (TYWMQYWRGGFAWDGT) are lumenal. A helical membrane pass occupies residues 41 to 61 (VLMFNWHPVLMVSGMVVLYGA). Heme b is bound by residues His47 and Arg67. Residues 62–83 (ASLVYRLPASWVGPKLPWKVLH) lie on the Cytoplasmic side of the membrane. L-ascorbate-binding residues include Lys76 and Lys80. Position 83 (His83) interacts with heme b. The chain crosses the membrane as a helical span at residues 84-104 (AALHLLAFTVTVVGLTAVFGF). The Lumenal segment spans residues 105 to 119 (HNHSKITHLYSLHSW). Asn106 carries N-linked (GlcNAc...) asparagine glycosylation. Residues 112 to 115 (HLYS) and His117 contribute to the heme b site. A helical membrane pass occupies residues 120–140 (LGITTVALFACQWFLGFAVFL). The Cytoplasmic segment spans residues 141-154 (LPWASQWLRSLLKP). Arg149 provides a ligand contact to L-ascorbate. Residues 155 to 175 (VHVFFGACILSLSIASVISGI) traverse the membrane as a helical segment. His156 and Glu177 together coordinate heme b. At 176–202 (NEKLFFVLKNATRPYSSLPGEAVFANS) the chain is on the lumenal side. The helical transmembrane segment at 203–223 (TGILVVSFGLLVLYILLASSW) threads the bilayer. Arg224 serves as a coordination point for heme b. Over 224 to 256 (RRPDPGALTDRQVWLLVSHYRWDKAKKACFAPC) the chain is Cytoplasmic.

As to quaternary structure, homodimer. Requires heme b as cofactor. In terms of processing, N-glycosylated.

The protein resides in the late endosome membrane. Its subcellular location is the lysosome membrane. It carries out the reaction Fe(3+)(out) + L-ascorbate(in) = monodehydro-L-ascorbate radical(in) + Fe(2+)(out) + H(+). Transmembrane reductase that uses ascorbate as an electron donor in the cytoplasm and transfers electrons across membranes to reduce iron cations Fe(3+) into Fe(2+) in the lumen of the late endosome and lysosome. Reduced iron can then be extruded from the late endosome and lysosome to the cytoplasm by divalent metal-specific transporters. It is therefore most probably involved in endosomal and lysosomal cellular iron homeostasis. This Rattus norvegicus (Rat) protein is Lysosomal membrane ascorbate-dependent ferrireductase CYB561A3.